A 130-amino-acid polypeptide reads, in one-letter code: Large ribosomal subunit protein bL12 (130 aa).

This sequence belongs to the bacterial ribosomal protein bL12 family. In terms of assembly, homodimer. Part of the ribosomal stalk of the 50S ribosomal subunit. Forms a multimeric L10(L12)X complex, where L10 forms an elongated spine to which 2 to 4 L12 dimers bind in a sequential fashion. Binds GTP-bound translation factors.

In terms of biological role, forms part of the ribosomal stalk which helps the ribosome interact with GTP-bound translation factors. Is thus essential for accurate translation. In Yersinia pestis bv. Antiqua (strain Angola), this protein is Large ribosomal subunit protein bL12.